The sequence spans 376 residues: Heterodimeric geranylgeranyl pyrophosphate synthase large subunit 2 (376 aa).

Residues 1 to 24 (MEPQILFLYLSLFILSLNFFFTNL) form the signal peptide. Residues Lys125, Arg128, and His157 each contribute to the isopentenyl diphosphate site. Residues Asp164 and Asp170 each contribute to the Mg(2+) site. Arg175 is a binding site for dimethylallyl diphosphate. Arg176 is a binding site for isopentenyl diphosphate. 5 residues coordinate dimethylallyl diphosphate: Lys261, Thr262, Gln299, Lys316, and Lys326.

It belongs to the FPP/GGPP synthase family. In terms of assembly, monomer. Part of a heterodimeric geranyl(geranyl)diphosphate synthase. Interacts with GGR. Requires Mg(2+) as cofactor. Mainly expressed in flowers.

It localises to the endoplasmic reticulum. It catalyses the reaction isopentenyl diphosphate + dimethylallyl diphosphate = (2E)-geranyl diphosphate + diphosphate. The catalysed reaction is isopentenyl diphosphate + (2E)-geranyl diphosphate = (2E,6E)-farnesyl diphosphate + diphosphate. It carries out the reaction isopentenyl diphosphate + (2E,6E)-farnesyl diphosphate = (2E,6E,10E)-geranylgeranyl diphosphate + diphosphate. It participates in isoprenoid biosynthesis; farnesyl diphosphate biosynthesis; farnesyl diphosphate from geranyl diphosphate and isopentenyl diphosphate: step 1/1. It functions in the pathway isoprenoid biosynthesis; geranyl diphosphate biosynthesis; geranyl diphosphate from dimethylallyl diphosphate and isopentenyl diphosphate: step 1/1. The protein operates within isoprenoid biosynthesis; geranylgeranyl diphosphate biosynthesis; geranylgeranyl diphosphate from farnesyl diphosphate and isopentenyl diphosphate: step 1/1. Its function is as follows. Heterodimeric geranyl(geranyl)-diphosphate (GPP) synthase large subunit. In vitro, the large subunit catalyzes mainly the trans-addition of the three molecules of IPP onto DMAPP to form geranylgeranyl pyrophosphate while the small subunit alone is inactive. Upon association of the two subunits, the product profile is not changed. The chain is Heterodimeric geranylgeranyl pyrophosphate synthase large subunit 2 (GGPPS2) from Arabidopsis thaliana (Mouse-ear cress).